We begin with the raw amino-acid sequence, 358 residues long: Alanine racemase (358 aa).

Lys-34 (proton acceptor; specific for D-alanine) is an active-site residue. Position 34 is an N6-(pyridoxal phosphate)lysine (Lys-34). Arg-129 lines the substrate pocket. Catalysis depends on Tyr-254, which acts as the Proton acceptor; specific for L-alanine. Residue Met-302 coordinates substrate.

It belongs to the alanine racemase family. Pyridoxal 5'-phosphate is required as a cofactor.

The enzyme catalyses L-alanine = D-alanine. It functions in the pathway amino-acid biosynthesis; D-alanine biosynthesis; D-alanine from L-alanine: step 1/1. Functionally, catalyzes the interconversion of L-alanine and D-alanine. May also act on other amino acids. This is Alanine racemase (alr) from Hamiltonella defensa subsp. Acyrthosiphon pisum (strain 5AT).